A 302-amino-acid chain; its full sequence is Melibiose operon regulatory protein (302 aa).

Residues 194–292 (SQMLGFIAEN…GMSPQQYRKL (99 aa)) enclose the HTH araC/xylS-type domain. 2 DNA-binding regions (H-T-H motif) span residues 211 to 232 (NDVAEHVKLNANYAMGIFQRVM) and 259 to 282 (ILDIALTAGFRSSSRFYSTFGKYV).

Its function is as follows. Transcription activator for the expression of the melAB operon. MelR binds at two sites located upstream of the melAB transcription site. The chain is Melibiose operon regulatory protein (melR) from Escherichia coli O6:H1 (strain CFT073 / ATCC 700928 / UPEC).